The primary structure comprises 412 residues: Glucose/galactose transporter (412 aa).

Helical transmembrane passes span 21 to 41 (YGFALTSLTLLFFMWGFITCL), 62 to 82 (LIQFCFFGAYFIVSLPAGQLV), 90 to 110 (GIVVGLIVAAIGCALFIPAAS), 113 to 133 (VYALFLGALFVLASGVTILQV), 158 to 178 (FNSLGTTVAPVFGAVLILSAA), 192 to 212 (FPYLLLALAFTVLAIIFAILK), 239 to 259 (LGAIGIFVYVGAEVSVGSFLV), 310 to 330 (AFVAIILLFITVATTGHIAMW), 331 to 351 (SVLAIGLFNSIMFPTIFSLAL), 363 to 383 (GILCLAIVGGAIVPLIQGALA), and 388 to 408 (IHLAFLMPIICYAYIAFYGLI).

This sequence belongs to the major facilitator superfamily. FHS transporter (TC 2.A.1.7) family.

It localises to the cell inner membrane. In terms of biological role, intake of glucose and galactose. In Brucella abortus (strain 2308), this protein is Glucose/galactose transporter (gluP).